Reading from the N-terminus, the 115-residue chain is Large ribosomal subunit protein bL19 (115 aa).

This sequence belongs to the bacterial ribosomal protein bL19 family.

Functionally, this protein is located at the 30S-50S ribosomal subunit interface and may play a role in the structure and function of the aminoacyl-tRNA binding site. This Oleidesulfovibrio alaskensis (strain ATCC BAA-1058 / DSM 17464 / G20) (Desulfovibrio alaskensis) protein is Large ribosomal subunit protein bL19.